The following is a 229-amino-acid chain: Orotidine 5'-phosphate decarboxylase (229 aa).

Substrate-binding positions include Asp10, Lys32, 59–68, Thr119, Arg180, Gln189, Gly209, and Arg210; that span reads DLKFHDIPNT. The active-site Proton donor is Lys61.

The protein belongs to the OMP decarboxylase family. Type 1 subfamily. Homodimer.

It carries out the reaction orotidine 5'-phosphate + H(+) = UMP + CO2. It participates in pyrimidine metabolism; UMP biosynthesis via de novo pathway; UMP from orotate: step 2/2. Its function is as follows. Catalyzes the decarboxylation of orotidine 5'-monophosphate (OMP) to uridine 5'-monophosphate (UMP). The sequence is that of Orotidine 5'-phosphate decarboxylase from Legionella pneumophila subsp. pneumophila (strain Philadelphia 1 / ATCC 33152 / DSM 7513).